Consider the following 240-residue polypeptide: Urease accessory protein UreD (240 aa).

It belongs to the UreD family. In terms of assembly, ureD, UreF and UreG form a complex that acts as a GTP-hydrolysis-dependent molecular chaperone, activating the urease apoprotein by helping to assemble the nickel containing metallocenter of UreC. The UreE protein probably delivers the nickel.

It localises to the cytoplasm. Required for maturation of urease via the functional incorporation of the urease nickel metallocenter. The chain is Urease accessory protein UreD from Granulibacter bethesdensis (strain ATCC BAA-1260 / CGDNIH1).